The sequence spans 558 residues: Zinc finger protein piragua (558 aa).

A ZAD domain is found at S15–Q94. Zn(2+) is bound by residues C17, C20, C67, and C70. The segment covering L132–D177 has biased composition (acidic residues). The disordered stretch occupies residues L132 to M178. 9 C2H2-type zinc fingers span residues F208–H231, Y237–H260, Y266–H288, F294–H316, F322–H344, F350–H372, Y414–H436, F441–H464, and F468–H490.

May be involved in transcriptional regulation. The function of this protein is unclear. According to one report, it is required for development and viability since mutants display defects in several developmental morphogenetic processes including dorsal closure and head involution, and die by the first instar larval stage. It may also be involved in fwe-mediated cellular competition. However, according to another report, it is not required for development or viability since mutants have no visible phenotype and are fertile. This Drosophila melanogaster (Fruit fly) protein is Zinc finger protein piragua.